A 269-amino-acid polypeptide reads, in one-letter code: Undecaprenyl-diphosphatase (269 aa).

8 helical membrane passes run 1-21 (MSIF…FLPI), 39-59 (LPIL…CTVF), 86-106 (LMMI…GLLL), 112-132 (TIDI…LIAS), 144-164 (VTLL…IPGI), 184-204 (AGEF…ILEI), 210-230 (LLAG…FVVG), and 249-269 (FAFY…GFAG).

The protein belongs to the UppP family.

Its subcellular location is the cell inner membrane. The enzyme catalyses di-trans,octa-cis-undecaprenyl diphosphate + H2O = di-trans,octa-cis-undecaprenyl phosphate + phosphate + H(+). Catalyzes the dephosphorylation of undecaprenyl diphosphate (UPP). Confers resistance to bacitracin. The protein is Undecaprenyl-diphosphatase of Treponema denticola (strain ATCC 35405 / DSM 14222 / CIP 103919 / JCM 8153 / KCTC 15104).